Consider the following 453-residue polypeptide: Calcium-binding tyrosine phosphorylation-regulated protein (453 aa).

Positions 12–49 (YGLKTLLEGVSRAILKTNPTNITQFAAVYFKELIVFRE) constitute an RIIa domain. 3 disordered regions span residues 86 to 165 (PIKP…PVSA), 246 to 278 (PVSE…QVTS), and 406 to 453 (IINP…PEQV). Positions 143–154 (DKPTTPKTDYTP) are enriched in low complexity.

In terms of assembly, interacts with FSCB. Phosphorylated on tyrosine residues during in vitro capacitation. Dephosphorylation affects its ability to bind calcium. In terms of tissue distribution, expressed in spermatozoa.

The protein localises to the cytoplasm. It localises to the cytoskeleton. The protein resides in the cell projection. It is found in the cilium. Its subcellular location is the flagellum. Functionally, may function as a regulator of both motility- and head-associated functions such as capacitation and the acrosome reaction. May bind calcium in vitro. This is Calcium-binding tyrosine phosphorylation-regulated protein (Cabyr) from Mus musculus (Mouse).